Reading from the N-terminus, the 276-residue chain is Urease accessory protein UreD (276 aa).

It belongs to the UreD family. As to quaternary structure, ureD, UreF and UreG form a complex that acts as a GTP-hydrolysis-dependent molecular chaperone, activating the urease apoprotein by helping to assemble the nickel containing metallocenter of UreC. The UreE protein probably delivers the nickel.

The protein localises to the cytoplasm. In terms of biological role, required for maturation of urease via the functional incorporation of the urease nickel metallocenter. The polypeptide is Urease accessory protein UreD (Polaromonas naphthalenivorans (strain CJ2)).